Consider the following 161-residue polypeptide: MNPRRKKRLGIVLAIFIGISATIGLMLYALNQNMDLFYTPTELVNGKPDGTKPEVGQRLRIGGMVVVGSVRRDPNSLKVSFDLHDVGPKVTITYEGILPDLFREGQGIVAQGVLKDATTVEAFEVLAKHDEEYMPPEIAEAMKKTHEPLQYSSEQKQGSGE.

Over 1–8 the chain is Cytoplasmic; that stretch reads MNPRRKKR. A helical; Signal-anchor for type II membrane protein membrane pass occupies residues 9-29; the sequence is LGIVLAIFIGISATIGLMLYA. Over 30–161 the chain is Periplasmic; it reads LNQNMDLFYT…SSEQKQGSGE (132 aa). Heme contacts are provided by histidine 129 and tyrosine 133. A disordered region spans residues 142–161; the sequence is MKKTHEPLQYSSEQKQGSGE. Positions 150–161 are enriched in polar residues; it reads QYSSEQKQGSGE.

Belongs to the CcmE/CycJ family.

It localises to the cell inner membrane. Its function is as follows. Heme chaperone required for the biogenesis of c-type cytochromes. Transiently binds heme delivered by CcmC and transfers the heme to apo-cytochromes in a process facilitated by CcmF and CcmH. This is Cytochrome c-type biogenesis protein CcmE from Vibrio parahaemolyticus serotype O3:K6 (strain RIMD 2210633).